The primary structure comprises 275 residues: MPRKAREYPEEGEFVVATVKRIHNYGAFLELDEYPGKEAFMHISEVASTWVRNIRDYLKEGQKVVAKVIRVDPRKGHIDLSLRRVTQQQRKAKLQEFKRAQKAENLLRLAAEKLGKDFEAAWREVWVPLEEEWGEVYAAFEDAAKDGIEVLKGHVPDEWLPVLKEIVENYVEVPTVTIDAEFEITVPKPNGVEIIKEALIRARDRANKEKDIEVKFTYQGAPRYRIDITAPDYYKAEEVLEDIAEEILRVIKQAGGEATLLRKEKRIRKVKKRKK.

An S1 motif domain is found at 12 to 83; sequence GEFVVATVKR…RKGHIDLSLR (72 aa).

It belongs to the eIF-2-alpha family. Heterotrimer composed of an alpha, a beta and a gamma chain.

Its function is as follows. eIF-2 functions in the early steps of protein synthesis by forming a ternary complex with GTP and initiator tRNA. The chain is Translation initiation factor 2 subunit alpha (eif2a) from Pyrococcus horikoshii (strain ATCC 700860 / DSM 12428 / JCM 9974 / NBRC 100139 / OT-3).